The chain runs to 389 residues: Chitin-binding protein CbpD (389 aa).

The signal sequence occupies residues 1 to 25 (MKHYSATLALLPLTLALFLPQAAHA). The 183-residue stretch at 26–208 (HGSMETPPSR…EAFYACIDVS (183 aa)) folds into the Chitin-binding type-4 domain. At Y37 the chain carries Phosphotyrosine. S210 carries the post-translational modification Phosphoserine.

Its subcellular location is the secreted. Its function is as follows. Binds but does not hydrolyze chitin. The polypeptide is Chitin-binding protein CbpD (cpbD) (Pseudomonas aeruginosa (strain UCBPP-PA14)).